The following is a 335-amino-acid chain: UPF0353 protein MUL_1490 (335 aa).

Transmembrane regions (helical) follow at residues 18-38 (WFFLFLLVVAGLIAIYVVLQL) and 67-87 (IPAMLLALSLVLFTVAMAGPT). Residues 98 to 298 (VVMLVIDVSQ…SVYVSLQQQI (201 aa)) form the VWFA domain. The chain crosses the membrane as a helical span at residues 309-329 (MGWLRLGALVLVAAALAALLI).

This sequence belongs to the UPF0353 family.

Its subcellular location is the cell membrane. In Mycobacterium ulcerans (strain Agy99), this protein is UPF0353 protein MUL_1490.